We begin with the raw amino-acid sequence, 126 residues long: Fatty acid-binding protein 2, liver (126 aa).

Cholate is bound by residues 54–56 (TPN), 99–101 (HIQ), and arginine 121.

The protein belongs to the calycin superfamily. Fatty-acid binding protein (FABP) family.

It localises to the cytoplasm. Its function is as follows. Binds free fatty acids and their coenzyme A derivatives, bilirubin, and some other small molecules in the cytoplasm. May be involved in intracellular lipid transport. The specificity of axolotl L-FABP differs from that of LB-FABP. Binds 2 ligands per protein molecule. The protein is Fatty acid-binding protein 2, liver of Ambystoma mexicanum (Axolotl).